The following is a 192-amino-acid chain: Shikimate kinase (192 aa).

Gly-15–Thr-20 is an ATP binding site. Thr-19 serves as a coordination point for Mg(2+). Asp-37, Arg-61, and Gly-83 together coordinate substrate. Arg-121 is an ATP binding site. Position 140 (Arg-140) interacts with substrate.

This sequence belongs to the shikimate kinase family. In terms of assembly, monomer. Mg(2+) is required as a cofactor.

Its subcellular location is the cytoplasm. It catalyses the reaction shikimate + ATP = 3-phosphoshikimate + ADP + H(+). It functions in the pathway metabolic intermediate biosynthesis; chorismate biosynthesis; chorismate from D-erythrose 4-phosphate and phosphoenolpyruvate: step 5/7. Functionally, catalyzes the specific phosphorylation of the 3-hydroxyl group of shikimic acid using ATP as a cosubstrate. The protein is Shikimate kinase of Cupriavidus pinatubonensis (strain JMP 134 / LMG 1197) (Cupriavidus necator (strain JMP 134)).